The following is a 79-amino-acid chain: Scutelatoxin (79 aa).

An N-terminal signal peptide occupies residues 1–21 (MKTLLLTLVVMTIMCLDLGYT). Intrachain disulfides connect C24–C41, C34–C59, C63–C71, and C72–C77.

It belongs to the three-finger toxin family. Short-chain subfamily. As to expression, expressed by the venom gland.

It localises to the secreted. This is Scutelatoxin from Oxyuranus scutellatus scutellatus (Australian taipan).